Consider the following 324-residue polypeptide: Methyltransferase pytC (324 aa).

The protein belongs to the methyltransferase superfamily. LaeA methyltransferase family.

It participates in secondary metabolite biosynthesis. Its function is as follows. Methyltransferase; part of the gene cluster that mediates the biosynthesis of pyranterreones, a family of antioxidative compounds. The first step of pyranonigrins biosynthesis is performed by the hybrid PKS-NRPS synthetase pytA that condenses 4 malonyl-CoA units ato the acetyl starter unit by the modular PKS of pytA. The acyl chain is then connected to an L-serine through the amide bond by the modular NRPS of pytA. A tetramic acid is formed and released from the PKS-NRPS pytA to give pyranterreone 5 with the help of the thioesterase pytI. Pyranterreone 5 could be methylated by pytC to afford pyranterreone 6. Both pyranterreones 5 and 6 are subsequently oxidized by the FAD-linked oxidoreductase pytB and the cytochrome P450 monooxygenase pytD to form the fused gamma-pyrone core, resulting in pyranterreones 7 and 11, respectively. The hydroxy group at C-8 of pyranterreones 7 and 11 are dehydrated by the aspartyl protease pytH to form a delta-7 double bond to give pyranterreones 3 and 1, 2 accordingly. The exo-methylene of pyranterreone 3 could be reduced into a pendant methyl by reductase pytE to provide pyranterreone 4, also known as cordylactam. Pyranterreone 4 can be reconverted to pyranterreone 3 through pytB-catalyzed dehydrogenation or further oxidized to pyranterreones 9 and 10. The sequence is that of Methyltransferase pytC from Aspergillus terreus (strain NIH 2624 / FGSC A1156).